We begin with the raw amino-acid sequence, 217 residues long: uncharacterized protein (217 aa).

Residues 1–24 form the signal peptide; sequence MRYTVLIALQGALLLLLLIDDGQG.

This is an uncharacterized protein from Aedes vexans (Inland floodwater mosquito).